We begin with the raw amino-acid sequence, 145 residues long: MDTPVYLYTDGACKGNPGAGGWGVLMRYGSHEKELFGGEAQTTNNRMELTAVIEGLKSLKRRCTVIICTDSQYVKNGMENWIHGWKRNGWKTAAKQPVKNDDLWKELDTLVGQHQVSWTWVKGHAGHAENERADDLANRGAAQFS.

Positions 1 to 142 (MDTPVYLYTD…ADDLANRGAA (142 aa)) constitute an RNase H type-1 domain. Mg(2+)-binding residues include aspartate 10, glutamate 48, aspartate 70, and aspartate 134.

This sequence belongs to the RNase H family. In terms of assembly, monomer. Mg(2+) is required as a cofactor.

It localises to the cytoplasm. It carries out the reaction Endonucleolytic cleavage to 5'-phosphomonoester.. In terms of biological role, endonuclease that specifically degrades the RNA of RNA-DNA hybrids. The sequence is that of Ribonuclease H from Neisseria meningitidis serogroup C / serotype 2a (strain ATCC 700532 / DSM 15464 / FAM18).